A 1382-amino-acid polypeptide reads, in one-letter code: Hepatocyte growth factor receptor (1382 aa).

The signal sequence occupies residues 1–24; sequence MKSPAVLAPGILVFLFTFVQKSDG. Residues 25–933 are Extracellular-facing; sequence ECKEALVKSR…VIVQPDQNFT (909 aa). The Sema domain occupies 27 to 516; that stretch reads KEALVKSRMN…TGKKITKIPL (490 aa). The N-linked (GlcNAc...) asparagine glycan is linked to Asn-45. Cystine bridges form between Cys-95–Cys-101, Cys-98–Cys-160, Cys-133–Cys-141, and Cys-173–Cys-176. N-linked (GlcNAc...) asparagine glycosylation occurs at Asn-106. Asn-149 is a glycosylation site (N-linked (GlcNAc...) asparagine). N-linked (GlcNAc...) asparagine glycosylation is found at Asn-203 and Asn-359. Intrachain disulfides connect Cys-299-Cys-364 and Cys-386-Cys-398. Asn-400 and Asn-406 each carry an N-linked (GlcNAc...) asparagine glycan. Cystine bridges form between Cys-521–Cys-539, Cys-527–Cys-562, Cys-530–Cys-546, and Cys-542–Cys-552. 3 IPT/TIG domains span residues 564–656, 658–740, and 743–837; these read PAIY…FSYV, PIIT…FIYR, and PIVY…LIYV. Thr-583 carries an O-linked (Man) threonine glycan. N-linked (GlcNAc...) asparagine glycans are attached at residues Asn-608 and Asn-636. O-linked (Man) threonine glycosylation is found at Thr-677 and Thr-762. Asn-786, Asn-880, and Asn-931 each carry an N-linked (GlcNAc...) asparagine glycan. The helical transmembrane segment at 934 to 956 threads the bilayer; the sequence is GLIVGVVSISIILLLLLGLFLWL. Topologically, residues 957-1382 are cytoplasmic; it reads KKRKQIKDLG…QDNVNGEGDT (426 aa). Ser-967 is subject to Phosphoserine. The residue at position 978 (Thr-978) is a Phosphothreonine. Phosphoserine is present on residues Ser-991, Ser-998, and Ser-1001. Tyr-1004 is subject to Phosphotyrosine. The region spanning 1079 to 1346 is the Protein kinase domain; it reads VHFNEVIGRG…RISAIFSTFI (268 aa). Residues 1085-1093 and Lys-1111 contribute to the ATP site; that span reads IGRGHFGCV. Residue Asp-1205 is the Proton acceptor of the active site. Residues 1213–1382 are interaction with RANBP9; that stretch reads LDEKFTVKVA…QDNVNGEGDT (170 aa). Tyr-1231 is subject to Phosphotyrosine. A phosphotyrosine; by autocatalysis mark is found at Tyr-1235 and Tyr-1236. Thr-1290 carries the post-translational modification Phosphothreonine. The tract at residues 1321 to 1360 is interaction with MUC20; it reads WHPKAELRPSFSELVSRISAIFSTFIGEHYVHVNATYVNV. Phosphotyrosine; by autocatalysis occurs at positions 1350 and 1357. A Phosphotyrosine modification is found at Tyr-1366.

It belongs to the protein kinase superfamily. Tyr protein kinase family. As to quaternary structure, heterodimer made of an alpha chain (50 kDa) and a beta chain (145 kDa) which are disulfide linked. Binds PLXNB1. Interacts when phosphorylated with downstream effectors including STAT3, PIK3R1, SRC, PCLG1, GRB2 and GAB1. Interacts with SPSB1, SPSB2 and SPSB4. Interacts with INPP5D/SHIP1. When phosphorylated at Tyr-1357, interacts with INPPL1/SHIP2. Interacts with RANBP9 and RANBP10, as well as SPSB1, SPSB2, SPSB3 and SPSB4. SPSB1 binding occurs in the presence and in the absence of HGF, however HGF treatment has a positive effect on this interaction. Interacts with MUC20; prevents interaction with GRB2 and suppresses hepatocyte growth factor-induced cell proliferation. Interacts with GRB10. Interacts with PTPN1 and PTPN2. Interacts with HSP90AA1 and HSP90AB1; the interaction suppresses MET kinase activity. Interacts with tensin TNS3. Interacts (when phosphorylated) with tensin TNS4 (via SH2 domain); the interaction increases MET protein stability by inhibiting MET endocytosis and subsequent lysosomal degradation. Autophosphorylated in response to ligand binding on Tyr-1235 and Tyr-1236 in the kinase domain leading to further phosphorylation of Tyr-1350 and Tyr-1357 in the C-terminal multifunctional docking site. Dephosphorylated by PTPRJ at Tyr-1350 and Tyr-1366. Dephosphorylated by PTPN1 and PTPN2. Post-translationally, ubiquitinated. Ubiquitination by CBL regulates the receptor stability and activity through proteasomal degradation. In terms of processing, O-mannosylation of IPT/TIG domains by TMEM260 is required for protein maturation. O-mannosylated residues are composed of single mannose glycans that are not elongated or modified.

Its subcellular location is the membrane. The enzyme catalyses L-tyrosyl-[protein] + ATP = O-phospho-L-tyrosyl-[protein] + ADP + H(+). Its activity is regulated as follows. In its inactive state, the C-terminal tail interacts with the catalytic domain and inhibits the kinase activity. Upon ligand binding, the C-terminal tail is displaced and becomes phosphorylated, thus increasing the kinase activity. In terms of biological role, receptor tyrosine kinase that transduces signals from the extracellular matrix into the cytoplasm by binding to hepatocyte growth factor/HGF ligand. Regulates many physiological processes including proliferation, scattering, morphogenesis and survival. Ligand binding at the cell surface induces autophosphorylation of MET on its intracellular domain that provides docking sites for downstream signaling molecules. Following activation by ligand, interacts with the PI3-kinase subunit PIK3R1, PLCG1, SRC, GRB2, STAT3 or the adapter GAB1. Recruitment of these downstream effectors by MET leads to the activation of several signaling cascades including the RAS-ERK, PI3 kinase-AKT, or PLCgamma-PKC. The RAS-ERK activation is associated with the morphogenetic effects while PI3K/AKT coordinates prosurvival effects. During embryonic development, MET signaling plays a role in gastrulation, development and migration of muscles and neuronal precursors, angiogenesis and kidney formation. In adults, participates in wound healing as well as organ regeneration and tissue remodeling. Also promotes differentiation and proliferation of hematopoietic cells. This is Hepatocyte growth factor receptor (MET) from Muntiacus muntjak (Barking deer).